The primary structure comprises 496 residues: Pyrrole-2-carboxylic acid decarboxylase (496 aa).

K(+) is bound at residue tryptophan 166. Prenylated FMN is bound by residues valine 168, arginine 170, glutamine 187, and histidine 188. Position 188 (histidine 188) interacts with Mn(2+). K(+) contacts are provided by alanine 218, alanine 219, methionine 221, and glutamate 229. Glutamate 229 is a binding site for prenylated FMN. Glutamate 229 contacts Mn(2+). The active-site Proton donor is glutamate 278. Prenylated FMN is bound at residue histidine 386.

This sequence belongs to the UbiD family. UbiD-like/FDC subfamily. Homodimer. Prenylated FMN is required as a cofactor. Requires Mn(2+) as cofactor. It depends on K(+) as a cofactor.

It carries out the reaction pyrrole-2-carboxylate + H(+) = 1H-pyrrole + CO2. The enzyme catalyses pyrrole-2-carboxylate + H2O = 1H-pyrrole + hydrogencarbonate. Its activity is regulated as follows. Imidazole acts as a reversible inhibitor via the formation of an imidazole-prenyl-FMN adduct. Activity is light sensitive. Catalyzes the prenyl-FMN-dependent decarboxylation of pyrrole-2-carboxylate (P2C). Can also catalyze the carboxylation of pyrrole in the presence of elevated concentrations of CO(2) or bicarbonate. Can accept a modest range of heteroaromatic compounds such as 3-methylpyrrole-2-carboxylate, indole-3-carboxylate and furan-2-carboxylate, and shows very low activity with thiophene-2-carboxylate. Attenuates the virulence of P.aeruginosa in a Drosophila model when overexpressed. The protein is Pyrrole-2-carboxylic acid decarboxylase of Pseudomonas aeruginosa (strain ATCC 15692 / DSM 22644 / CIP 104116 / JCM 14847 / LMG 12228 / 1C / PRS 101 / PAO1).